We begin with the raw amino-acid sequence, 250 residues long: Histone H1.2 (250 aa).

Residues 1 to 11 (MSDSAVATSAS) show a composition bias toward polar residues. Disordered regions lie at residues 1–53 (MSDS…QMVD) and 101–250 (KLIQ…ATKK). The segment covering 27-42 (KKAAATPKSKKSTAAP) has biased composition (low complexity). Positions 44 to 118 (SHPPTQQMVD…GASGSFKLSR (75 aa)) constitute an H15 domain. A compositionally biased stretch (basic and acidic residues) spans 120-133 (AKKDPKPKASAVEK). A compositionally biased stretch (low complexity) spans 151–161 (STSTTKKAAGA). Over residues 174–191 (KSVEKKRADKAKAKDAKK) the composition is skewed to basic and acidic residues. The span at 192 to 211 (TGTIKAKPTTAKAKSSATKP) shows a compositional bias: low complexity. 2 stretches are compositionally biased toward basic residues: residues 212 to 225 (KTPK…KPKK) and 235 to 250 (TAVK…ATKK).

The protein belongs to the histone H1/H5 family.

Its subcellular location is the nucleus. The protein resides in the chromosome. Its function is as follows. Histones H1 are necessary for the condensation of nucleosome chains into higher-order structures. This chain is Histone H1.2 (His1.2), found in Drosophila virilis (Fruit fly).